The sequence spans 259 residues: 3-deoxy-manno-octulosonate cytidylyltransferase (259 aa).

This sequence belongs to the KdsB family.

The protein localises to the cytoplasm. It carries out the reaction 3-deoxy-alpha-D-manno-oct-2-ulosonate + CTP = CMP-3-deoxy-beta-D-manno-octulosonate + diphosphate. The protein operates within nucleotide-sugar biosynthesis; CMP-3-deoxy-D-manno-octulosonate biosynthesis; CMP-3-deoxy-D-manno-octulosonate from 3-deoxy-D-manno-octulosonate and CTP: step 1/1. It functions in the pathway bacterial outer membrane biogenesis; lipopolysaccharide biosynthesis. In terms of biological role, activates KDO (a required 8-carbon sugar) for incorporation into bacterial lipopolysaccharide in Gram-negative bacteria. This Protochlamydia amoebophila (strain UWE25) protein is 3-deoxy-manno-octulosonate cytidylyltransferase.